The chain runs to 252 residues: Pantothenate synthetase (252 aa).

Position 29–36 (29–36 (MGNLHAGH)) interacts with ATP. Histidine 36 acts as the Proton donor in catalysis. Glutamine 60 is a (R)-pantoate binding site. Glutamine 60 serves as a coordination point for beta-alanine. 146–149 (GEKD) provides a ligand contact to ATP. Glutamine 152 serves as a coordination point for (R)-pantoate. Residues valine 175 and 183-186 (CSSR) each bind ATP.

It belongs to the pantothenate synthetase family. Homodimer.

The protein localises to the cytoplasm. It catalyses the reaction (R)-pantoate + beta-alanine + ATP = (R)-pantothenate + AMP + diphosphate + H(+). It participates in cofactor biosynthesis; (R)-pantothenate biosynthesis; (R)-pantothenate from (R)-pantoate and beta-alanine: step 1/1. In terms of biological role, catalyzes the condensation of pantoate with beta-alanine in an ATP-dependent reaction via a pantoyl-adenylate intermediate. The polypeptide is Pantothenate synthetase (Legionella pneumophila (strain Lens)).